The primary structure comprises 96 residues: Small ribosomal subunit protein bS6 (96 aa).

This sequence belongs to the bacterial ribosomal protein bS6 family.

Binds together with bS18 to 16S ribosomal RNA. This Bacillus thuringiensis subsp. konkukian (strain 97-27) protein is Small ribosomal subunit protein bS6.